A 207-amino-acid chain; its full sequence is ATP-dependent dethiobiotin synthetase BioD (207 aa).

An ATP-binding site is contributed by 11-16 (DVGKTF). Threonine 15 is a binding site for Mg(2+). Lysine 31 is a catalytic residue. A substrate-binding site is contributed by serine 35. Residues aspartate 42, 95–98 (ETSG), and 155–156 (NQ) each bind ATP. Mg(2+) is bound by residues aspartate 42 and glutamate 95.

Belongs to the dethiobiotin synthetase family. In terms of assembly, homodimer. Mg(2+) is required as a cofactor.

It localises to the cytoplasm. The enzyme catalyses (7R,8S)-7,8-diammoniononanoate + CO2 + ATP = (4R,5S)-dethiobiotin + ADP + phosphate + 3 H(+). The protein operates within cofactor biosynthesis; biotin biosynthesis; biotin from 7,8-diaminononanoate: step 1/2. In terms of biological role, catalyzes a mechanistically unusual reaction, the ATP-dependent insertion of CO2 between the N7 and N8 nitrogen atoms of 7,8-diaminopelargonic acid (DAPA, also called 7,8-diammoniononanoate) to form a ureido ring. This chain is ATP-dependent dethiobiotin synthetase BioD, found in Chlamydia abortus (strain DSM 27085 / S26/3) (Chlamydophila abortus).